The chain runs to 83 residues: Disintegrin bitistatin (83 aa).

The Disintegrin domain maps to 2–83; it reads PPVCGNKILE…GKSSDCPWNH (82 aa). Cystine bridges form between Cys-5/Cys-24, Cys-5/Cys-34, Cys-16/Cys-29, Cys-16/Cys-34, Cys-18/Cys-24, Cys-18/Cys-29, Cys-28/Cys-51, Cys-42/Cys-48, Cys-47/Cys-72, and Cys-60/Cys-79. The Cell attachment site motif lies at 64–66; sequence RGD.

This sequence belongs to the venom metalloproteinase (M12B) family. P-II subfamily. P-IIa sub-subfamily. As to quaternary structure, monomer. Exists in 3 forms in the venom. The forms A, B, and C are present at 53%, 32% and 15%. The forms A and B differ by their disulfide bond pattern in the N-terminal part. No information is known about form C. In terms of tissue distribution, expressed by the venom gland.

It localises to the secreted. Functionally, inhibits fibrinogen interaction with platelets. Acts by binding to alpha-IIb/beta-3 (ITGA2B/ITGB3) on the platelet surface and inhibits aggregation induced by ADP, thrombin, platelet-activating factor and collagen. This Bitis arietans (African puff adder) protein is Disintegrin bitistatin.